The primary structure comprises 680 residues: DNA ligase (680 aa).

NAD(+)-binding positions include 44 to 48 (DHVYD), 93 to 94 (SM), and glutamate 125. Lysine 127 acts as the N6-AMP-lysine intermediate in catalysis. Residues arginine 148, glutamate 182, lysine 298, and lysine 322 each contribute to the NAD(+) site. Cysteine 416, cysteine 419, cysteine 434, and cysteine 439 together coordinate Zn(2+). In terms of domain architecture, BRCT spans 600-680 (NPDSEWNGRR…QFSQAMKEEQ (81 aa)).

Belongs to the NAD-dependent DNA ligase family. LigA subfamily. It depends on Mg(2+) as a cofactor. Mn(2+) serves as cofactor.

It carries out the reaction NAD(+) + (deoxyribonucleotide)n-3'-hydroxyl + 5'-phospho-(deoxyribonucleotide)m = (deoxyribonucleotide)n+m + AMP + beta-nicotinamide D-nucleotide.. Its function is as follows. DNA ligase that catalyzes the formation of phosphodiester linkages between 5'-phosphoryl and 3'-hydroxyl groups in double-stranded DNA using NAD as a coenzyme and as the energy source for the reaction. It is essential for DNA replication and repair of damaged DNA. In Limosilactobacillus reuteri (strain DSM 20016) (Lactobacillus reuteri), this protein is DNA ligase.